The following is a 368-amino-acid chain: 3-dehydroquinate synthase (368 aa).

NAD(+) contacts are provided by residues 80-85, 114-118, 138-139, K151, and K160; these read DAESAK, GAATD, and TT. E193, H255, and H271 together coordinate Zn(2+).

It belongs to the sugar phosphate cyclases superfamily. Dehydroquinate synthase family. Co(2+) serves as cofactor. It depends on Zn(2+) as a cofactor. NAD(+) is required as a cofactor.

Its subcellular location is the cytoplasm. The enzyme catalyses 7-phospho-2-dehydro-3-deoxy-D-arabino-heptonate = 3-dehydroquinate + phosphate. The protein operates within metabolic intermediate biosynthesis; chorismate biosynthesis; chorismate from D-erythrose 4-phosphate and phosphoenolpyruvate: step 2/7. In terms of biological role, catalyzes the conversion of 3-deoxy-D-arabino-heptulosonate 7-phosphate (DAHP) to dehydroquinate (DHQ). This is 3-dehydroquinate synthase from Corynebacterium jeikeium (strain K411).